A 239-amino-acid polypeptide reads, in one-letter code: Probable transcriptional regulatory protein Tcr_1104 (239 aa).

Belongs to the TACO1 family.

The protein resides in the cytoplasm. This chain is Probable transcriptional regulatory protein Tcr_1104, found in Hydrogenovibrio crunogenus (strain DSM 25203 / XCL-2) (Thiomicrospira crunogena).